Here is a 194-residue protein sequence, read N- to C-terminus: Fimbrial protein 987P (194 aa).

The signal sequence occupies residues Met-1–Ala-23. Cys-46 and Cys-85 are disulfide-bonded.

Belongs to the fimbrial protein family.

The protein resides in the fimbrium. In Escherichia coli, this protein is Fimbrial protein 987P (fasA).